We begin with the raw amino-acid sequence, 209 residues long: Rac-like GTP-binding protein ARAC7 (209 aa).

13 to 20 (GDGAVGKT) is a binding site for GTP. Positions 35–43 (YIPTVFDNF) match the Effector region motif. GTP is bound by residues 60-64 (DTAGQ) and 118-121 (TKLD). Residues cysteine 196, cysteine 203, and cysteine 206 are each lipidated (S-palmitoyl cysteine).

It belongs to the small GTPase superfamily. Rho family. Although this sequence has a C-terminal -CXXX, it is palmitoylated at Cys-206, rather than prenylated.

It is found in the membrane. Its function is as follows. Acts as a negative regulator of abscisic acid (ABA) responses. This chain is Rac-like GTP-binding protein ARAC7 (ARAC7), found in Arabidopsis thaliana (Mouse-ear cress).